The primary structure comprises 249 residues: Probable phosphatase VVA0289 (249 aa).

Positions 8, 10, 16, 41, 74, 102, 132, 194, and 196 each coordinate Zn(2+).

Belongs to the PHP family. The cofactor is Zn(2+).

The chain is Probable phosphatase VVA0289 from Vibrio vulnificus (strain YJ016).